A 163-amino-acid polypeptide reads, in one-letter code: 3-isopropylmalate dehydratase small subunit (163 aa).

It belongs to the LeuD family. LeuD type 2 subfamily. In terms of assembly, heterodimer of LeuC and LeuD.

It catalyses the reaction (2R,3S)-3-isopropylmalate = (2S)-2-isopropylmalate. The protein operates within amino-acid biosynthesis; L-leucine biosynthesis; L-leucine from 3-methyl-2-oxobutanoate: step 2/4. In terms of biological role, catalyzes the isomerization between 2-isopropylmalate and 3-isopropylmalate, via the formation of 2-isopropylmaleate. In Endomicrobium trichonymphae, this protein is 3-isopropylmalate dehydratase small subunit.